The sequence spans 1000 residues: ATP-dependent DNA/RNA helicase DHX36 (1000 aa).

The segment at M1–G43 is required for recruitment to cytoplasmic stress granules. Residues M1–E53 are disordered. A required for the pre-miR-134 transport region spans residues M1–A96. Residues M1–M192 are necessary for nuclear and nucleolar caps localizations. The segment covering P15–G40 has biased composition (gly residues). Positions H45–K67 are DSM (DHX36-specific motif). A required for G4-DNA- and G4-RNA-binding region spans residues H45–K97. RecA-like domain stretches follow at residues N98–I378 and P379–L620. S153 bears the Phosphoserine mark. The Helicase ATP-binding domain occupies V209 to P379. ATP is bound at residue G225–T230. The interval R257–Q309 is necessary for interaction with single-stranded DNA at the 3'-end of the G4-DNA structure. Positions D326–H329 match the DEAH box motif. Mg(2+)-binding residues include E327 and H329. The Helicase C-terminal domain occupies A469 to R639. Residues W490–S549 are necessary for interaction with single-stranded DNA at the 3'-end of the G4-DNA structure. The short motif at D509–M520 is the Nuclear localization signal element. Residues S549 and R594–R597 each bind ATP. The interval P621–V690 is WH domain. 3 necessary for interaction with single-stranded DNA at the 3'-end of the G4-DNA structure regions span residues E630–P689, N841–H852, and H862–Y892. An OB-fold-like subdomains region spans residues P833–V897. K939 carries the N6-acetyllysine modification.

As to quaternary structure, found in a multi-helicase-TICAM1 complex at least composed of DHX36, DDX1, DDX21 and TICAM1; this complex exists in resting cells with or without dsRNA poly(I:C) ligand stimulation. Interacts (via C-terminus) with TICAM1 (via TIR domain). Interacts (via C-terminus) with DDX21; this interaction serves as bridges to TICAM1. Interacts with TERT; this interaction is dependent on the ability of DHX36 to bind to the G-quadruplex RNA (G4-RNA) structure present in the telomerase RNA template component (TERC). Interacts with DKC1; this interaction is dependent on the ability of DHX36 to bind to the G4-RNA structure present in TERC. Interacts with PARN; this interaction stimulates PARN to enhance uPA mRNA decay. Interacts with EXOSC3; this interaction occurs in a RNase-insensitive manner. Interacts with EXOSC10; this interaction occurs in a RNase-insensitive manner. Interacts with ILF3; this interaction occurs in a RNA-dependent manner. Interacts with ELAVL1; this interaction occurs in an RNA-dependent manner. Interacts with DDX5; this interaction occurs in a RNA-dependent manner. Interacts with DDX17; this interaction occurs in a RNA-dependent manner. Interacts with HDAC1; this interaction occurs in a RNA-dependent manner. Interacts with HDAC3; this interaction occurs in a RNA-dependent manner. Interacts with HDAC4. Interacts with AGO1. Interacts with AGO2. Interacts with ERCC6. Mg(2+) is required as a cofactor.

Its subcellular location is the nucleus. It localises to the cytoplasm. The protein localises to the cytosol. It is found in the stress granule. The protein resides in the nucleus speckle. Its subcellular location is the chromosome. It localises to the telomere. The protein localises to the mitochondrion. It is found in the perikaryon. The protein resides in the cell projection. Its subcellular location is the dendrite. It localises to the axon. The enzyme catalyses ATP + H2O = ADP + phosphate + H(+). ATPase activity is enhanced in the presence of homomeric poly(U) RNAs, but not by double-stranded DNA (dsDNA), double-stranded RNA (dsRNA) and tRNA. In terms of biological role, multifunctional ATP-dependent helicase that unwinds G-quadruplex (G4) structures. Plays a role in many biological processes such as genomic integrity, gene expression regulations and as a sensor to initiate antiviral responses. G4 structures correspond to helical structures containing guanine tetrads. Binds with high affinity to and unwinds G4 structures that are formed in nucleic acids (G4-DNA and G4-RNA). Plays a role in genomic integrity. Converts the G4-RNA structure present in telomerase RNA template component (TREC) into a double-stranded RNA to promote P1 helix formation that acts as a template boundary ensuring accurate reverse transcription. Plays a role in transcriptional regulation. Resolves G4-DNA structures in promoters of genes, such as YY1, KIT/c-kit and ALPL and positively regulates their expression. Plays a role in post-transcriptional regulation. Unwinds a G4-RNA structure located in the 3'-UTR polyadenylation site of the pre-mRNA TP53 and stimulates TP53 pre-mRNA 3'-end processing in response to ultraviolet (UV)-induced DNA damage. Binds to the precursor-microRNA-134 (pre-miR-134) terminal loop and regulates its transport into the synapto-dendritic compartment. Involved in the pre-miR-134-dependent inhibition of target gene expression and the control of dendritic spine size. Plays a role in the regulation of cytoplasmic mRNA translation and mRNA stability. Binds to both G4-RNA structures and alternative non-quadruplex-forming sequence within the 3'-UTR of the PITX1 mRNA regulating negatively PITX1 protein expression. Binds to both G4-RNA structure in the 5'-UTR and AU-rich elements (AREs) localized in the 3'-UTR of NKX2-5 mRNA to either stimulate protein translation or induce mRNA decay in an ELAVL1-dependent manner, respectively. Also binds to ARE sequences present in several mRNAs mediating exosome-mediated 3'-5' mRNA degradation. Involved in cytoplasmic urokinase-type plasminogen activator (uPA) mRNA decay. Component of a multi-helicase-TICAM1 complex that acts as a cytoplasmic sensor of viral double-stranded RNA (dsRNA) and plays a role in the activation of a cascade of antiviral responses including the induction of pro-inflammatory cytokines via the adapter molecule TICAM1. Required for the early embryonic development and hematopoiesis. Involved in the regulation of cardioblast differentiation and proliferation during heart development. Involved in spermatogonia differentiation. May play a role in ossification. This is ATP-dependent DNA/RNA helicase DHX36 from Rattus norvegicus (Rat).